The chain runs to 466 residues: Mitochondrial-processing peptidase subunit beta (466 aa).

Residue H73 participates in Zn(2+) binding. The active-site Proton acceptor is E76. Zn(2+)-binding residues include H77 and E153.

Belongs to the peptidase M16 family. As to quaternary structure, heterodimer of mppA (alpha) and mppB (beta) subunits, forming the mitochondrial processing protease (MPP) in which mppA is involved in substrate recognition and binding and mppB is the catalytic subunit. Zn(2+) serves as cofactor.

The protein resides in the mitochondrion matrix. It carries out the reaction Release of N-terminal transit peptides from precursor proteins imported into the mitochondrion, typically with Arg in position P2.. With respect to regulation, binding to mppA is required for catalytic activity. Its function is as follows. Catalytic subunit of the essential mitochondrial processing protease (MPP), which cleaves the mitochondrial sequence off newly imported precursors proteins. Preferentially, cleaves after an arginine at position P2. In Lentinula edodes (Shiitake mushroom), this protein is Mitochondrial-processing peptidase subunit beta (mppB).